The following is a 649-amino-acid chain: DNA ligase (649 aa).

Residues 62–66 (DSTYD) and 104–105 (ST) each bind NAD(+). The active-site N6-AMP-lysine intermediate is the lysine 142. Residues arginine 158, glutamate 189, and lysine 301 each coordinate NAD(+). Cysteine 389, cysteine 392, cysteine 405, and cysteine 411 together coordinate Zn(2+). The 81-residue stretch at 569–649 (PGETPVFGKI…LDYLALISTY (81 aa)) folds into the BRCT domain.

The protein belongs to the NAD-dependent DNA ligase family. LigA subfamily. The cofactor is Mg(2+). It depends on Mn(2+) as a cofactor.

The enzyme catalyses NAD(+) + (deoxyribonucleotide)n-3'-hydroxyl + 5'-phospho-(deoxyribonucleotide)m = (deoxyribonucleotide)n+m + AMP + beta-nicotinamide D-nucleotide.. Its function is as follows. DNA ligase that catalyzes the formation of phosphodiester linkages between 5'-phosphoryl and 3'-hydroxyl groups in double-stranded DNA using NAD as a coenzyme and as the energy source for the reaction. It is essential for DNA replication and repair of damaged DNA. The sequence is that of DNA ligase from Psychromonas ingrahamii (strain DSM 17664 / CCUG 51855 / 37).